The following is a 312-amino-acid chain: Small ribosomal subunit protein RACK1 (312 aa).

7 WD repeats span residues 9-42, 63-93, 105-135, 148-180, 192-222, 233-262, and 279-307; these read GHRG…ISWK, GHTG…RMWD, KHTK…RVWN, GHED…KVWN, GHSN…LLWD, NVES…SVYD, and PSEC…RVWS.

This sequence belongs to the WD repeat G protein beta family. Ribosomal protein RACK1 subfamily.

This chain is Small ribosomal subunit protein RACK1, found in Leishmania chagasi.